A 385-amino-acid polypeptide reads, in one-letter code: Effector protein hopAB3 (385 aa).

3 disordered regions span residues 1-61, 73-139, and 215-293; these read MVGI…AGRP, TREW…SPLY, and ADSQ…PRIN. Residues 1–333 form a host recognition region; sequence MVGISGRAGP…INMEDLRAAL (333 aa). A compositionally biased stretch (low complexity) spans 217–234; that stretch reads SQQAARAPARTPPRSSVR. Polar residues-rich tracts occupy residues 245–256 and 265–283; these read ATESSSGSNQRS and MTSN…TSQR.

This sequence belongs to the HopAB family. Interacts physically with plant cell Pto.

It is found in the secreted. Its function is as follows. Effector protein involved in gene-for-gene resistance in tomato plants. It is recognized by the host Pto resistance protein and elicits Pto and Prf-dependent hypersensitive response (HR) and programmed cell death (PCD), resulting in host immunity. In susceptible plants, promotes virulence, in part, by enhancing the development of disease symptoms and bacterial growth. This Pseudomonas syringae pv. maculicola protein is Effector protein hopAB3 (hopAB3).